The primary structure comprises 88 residues: MGIARILSAVLFLSVLFVVTFPTLLSADHHDGRIDTCRLPSDRGGCKASFERWYFNGTTCTKFVYGGYGGNDNRFPTEKACMKRCAKA.

The signal sequence occupies residues 1–27; sequence MGIARILSAVLFLSVLFVVTFPTLLSA. Residues 28-33 constitute a propeptide that is removed on maturation; the sequence is DHHDGR. Residues 37–85 form the BPTI/Kunitz inhibitor domain; that stretch reads CRLPSDRGGCKASFERWYFNGTTCTKFVYGGYGGNDNRFPTEKACMKRC. 2 disulfide bridges follow: Cys37–Cys85 and Cys60–Cys81.

The protein belongs to the venom Kunitz-type family. 01 (intermediate) subfamily. In terms of tissue distribution, expressed by the venom gland.

It localises to the secreted. In terms of biological role, serine protease inhibitor that inhibits trypsin at a molar ratio of 1:1. This chain is Kunitz-type U15-theraphotoxin-Hhn1n, found in Cyriopagopus hainanus (Chinese bird spider).